We begin with the raw amino-acid sequence, 276 residues long: Digeranylgeranylglyceryl phosphate synthase (276 aa).

Transmembrane regions (helical) follow at residues 14–34 (NCIL…GHFP), 40–60 (LLIF…NDYF), 92–112 (FAVG…LGVI), 146–166 (GAVA…AFLV), 202–222 (VGVL…KASV), 224–244 (VGYY…YLIL), and 256–276 (QKLL…AAIV).

This sequence belongs to the UbiA prenyltransferase family. DGGGP synthase subfamily. Mg(2+) serves as cofactor.

Its subcellular location is the cell membrane. It carries out the reaction sn-3-O-(geranylgeranyl)glycerol 1-phosphate + (2E,6E,10E)-geranylgeranyl diphosphate = 2,3-bis-O-(geranylgeranyl)-sn-glycerol 1-phosphate + diphosphate. It participates in membrane lipid metabolism; glycerophospholipid metabolism. Prenyltransferase that catalyzes the transfer of the geranylgeranyl moiety of geranylgeranyl diphosphate (GGPP) to the C2 hydroxyl of (S)-3-O-geranylgeranylglyceryl phosphate (GGGP). This reaction is the second ether-bond-formation step in the biosynthesis of archaeal membrane lipids. The chain is Digeranylgeranylglyceryl phosphate synthase from Thermococcus onnurineus (strain NA1).